A 290-amino-acid chain; its full sequence is Short chain dehydrogenase/reductase nsrO (290 aa).

NADP(+)-binding residues include Ile37 and Lys149. Catalysis depends on proton donor residues Ser168 and Tyr182. The NADP(+) site is built by Tyr182, Lys186, and Thr221. The Lowers pKa of active site Tyr role is filled by Lys186.

This sequence belongs to the short-chain dehydrogenases/reductases (SDR) family.

It functions in the pathway secondary metabolite biosynthesis. Short chain dehydrogenase/reductase; part of the gene cluster that mediates the biosynthesis of the tetrahydroxanthone dimer neosartorin, which exhibits antibacterial activity. The two different monomeric units appear to be synthesized by the same set of enzymes, among which the Baeyer-Villiger monooxygenase nsrF is the key enzyme for the divergence of the biosynthetic routes. The pathway begins with the synthesis of atrochrysone thioester by the polyketide synthase nsrB. The atrochrysone carboxyl ACP thioesterase nsrC then breaks the thioester bond and releases the atrochrysone carboxylic acid from AacuL. Atrochrysone carboxylic acid is decarboxylated by the decarboxylase nsrE, and oxidized by the anthrone oxygenase nsrD to yield emodin. Emodin is then reduced to emodin hydroquinone by the oxidoreductase nsrR. A-ring reduction by the short chain dehydrogenase nsrJ, dehydration by the scytalone dehydratase-like protein nsrI and probable spontaneous re-oxidation, results in overall deoxygenation to chrysophanol. The Baeyer-Villiger monooxygenase nsrF accepts chrysophanol as a substrate to insert one oxygen atom at two different positions to yield the precursors of both monomric units. NsrF is promiscuous/flexible in interacting with the 2 (non methylated and methylated) aromatic rings of chrysophanol, thus diverging the biosynthetic pathway at this point. After the hydrolysis of the lactones, methylesterification by the methyltransferase nsrG yields respectively moniliphenone and 2,2',6'-trihydroxy-4-methyl-6-methoxya-cyldiphenylmethanone. The next steps are the hydroxylation by the FAD-dependent monooxygenase nsrK, followed by isomerization by the monooxygenase nsrQ. The short chain dehydrogenase/reductase nsrO then catalyzes the C-5 ketoreduction to give the xanthone skeleton of blennolide C and 5-acetylblennolide A. The acetyltransferase nsrL has a strict substrate specificity and uses only blennolide A but not blennolide C to yield 5-acetylblennolide A as the single-acetylated product. In the final step of the biosynthesis, the heterodimerization of the 2 xanthones, blennolide C and 5-acetylblennolide A, is catalyzed by the cytochrome P450 monooxygenase nsrP. NsrP can utilize at least three different xanthones as its substrates to perform the dimerization reaction. This is Short chain dehydrogenase/reductase nsrO from Aspergillus novofumigatus (strain IBT 16806).